The sequence spans 281 residues: 4-diphosphocytidyl-2-C-methyl-D-erythritol kinase (281 aa).

The active site involves K11. 92-102 (LVSAGLAGGSA) contacts ATP. D132 is a catalytic residue.

The protein belongs to the GHMP kinase family. IspE subfamily.

It carries out the reaction 4-CDP-2-C-methyl-D-erythritol + ATP = 4-CDP-2-C-methyl-D-erythritol 2-phosphate + ADP + H(+). Its pathway is isoprenoid biosynthesis; isopentenyl diphosphate biosynthesis via DXP pathway; isopentenyl diphosphate from 1-deoxy-D-xylulose 5-phosphate: step 3/6. Catalyzes the phosphorylation of the position 2 hydroxy group of 4-diphosphocytidyl-2C-methyl-D-erythritol. The chain is 4-diphosphocytidyl-2-C-methyl-D-erythritol kinase from Ehrlichia ruminantium (strain Welgevonden).